Consider the following 473-residue polypeptide: Aspartyl aminopeptidase 1 (473 aa).

Residue His93 coordinates Zn(2+). Residue His168 coordinates substrate. Residues Asp262, Glu298, Glu299, and Asp343 each coordinate Zn(2+). Glu298 is a binding site for substrate. Substrate is bound by residues Asp343, His346, Lys371, and Tyr378. His437 is a binding site for Zn(2+).

Belongs to the peptidase M18 family. In terms of assembly, tetrahedron-shaped homododecamer built from six homodimers. Interacts with autophagy receptor Nbr1. Zn(2+) serves as cofactor.

The protein localises to the cytoplasm. Its subcellular location is the vacuole lumen. The catalysed reaction is Release of an N-terminal aspartate or glutamate from a peptide, with a preference for aspartate.. Aspartyl aminopeptidase that is able to remove aspartyl residue at N-terminus of angiotensin I. Also acts as a chaperone and efficiently suppressed the thermal aggregation of citrate synthase. This Schizosaccharomyces pombe (strain 972 / ATCC 24843) (Fission yeast) protein is Aspartyl aminopeptidase 1 (ape4).